Consider the following 416-residue polypeptide: MTGTIPSNSQDPDLVLSARPSAHGRFGRFGGQYVPETLIPALTELEQAAATAWKDESFTKELTQLLKTYVGRETPLYEATRLTKHYERGTVGPRIWLKREDLNHTGAHKINNALGQALLAIRMGKKRIIAETGAGQHGVATATVCARFGLECIIYMGQEDMRRQSLNVFRMKLLGAKVRPVTAGTATLKDATSEAIRDWVTNVETTHYILGSVAGPHPYPMLVRDFHAVIGEEAKKQCLEAFGRSPDVLLACVGGGSNAMGLFHPFIEDRSVRMIGVEAAGDGVHTGRHAATITEGRIGVLHGAMSLLLQDSNGQVQEAHSISAGLDYPGVGPEHSYLKEIGRAEYAAVTDQEALSALQLLSEKEGIIPALETAHALAFLEKLCPTLSSGKEIVINCSGRGDKDVNTVAEKLKTKN.

K109 carries the N6-(pyridoxal phosphate)lysine modification.

This sequence belongs to the TrpB family. In terms of assembly, tetramer of two alpha and two beta chains. Pyridoxal 5'-phosphate serves as cofactor.

It carries out the reaction (1S,2R)-1-C-(indol-3-yl)glycerol 3-phosphate + L-serine = D-glyceraldehyde 3-phosphate + L-tryptophan + H2O. The protein operates within amino-acid biosynthesis; L-tryptophan biosynthesis; L-tryptophan from chorismate: step 5/5. In terms of biological role, the beta subunit is responsible for the synthesis of L-tryptophan from indole and L-serine. The polypeptide is Tryptophan synthase beta chain (Prochlorococcus marinus (strain SARG / CCMP1375 / SS120)).